Reading from the N-terminus, the 441-residue chain is MGGLRLLAVALTCSCWWPQGGQGKTLRGSFSSAAARDAQGQSIGHFEFHGDHALLCVRINNVAVAVGKEAKLYLFQAQEWLKLLESSPGYSCSERLARAQLTVTVTQTEHNLTVSQLPAPQTWRVFYADKFTCRDDSESPQGEEIPFEMVLLNPDAEGNPLDHFSARESGLHEFFFLLVLVYFVTACIYAQSLWQAMKKGGPMHTILKVLTTALLLQAASALANYIHLSRYSRDGLGVPLIGSLAEVFDIASQIQMLYLLLSLCMGWTIVRMKKSQSRPLQWDSTPASTGIAVFIVITQSILLLWEQFEDTSHHSAHSHRSLAGLLLIVLRICLALSLGCGLYQVITVERSALKREFYITFAKGCILWFLCQPALACIAVAFNDYQRDKLITVGVILCQAVAMVILYRLFLSHSLYWEVSSLSSVTLPLTISSAHRGRPHF.

A signal peptide spans 1 to 23 (MGGLRLLAVALTCSCWWPQGGQG). Asparagine 111 is a glycosylation site (N-linked (GlcNAc...) asparagine). Transmembrane regions (helical) follow at residues 174–194 (FFFL…QSLW), 206–226 (ILKV…ANYI), 250–270 (IASQ…WTIV), 285–305 (TPAS…LLLW), 322–342 (LAGL…GCGL), 361–381 (FAKG…IAVA), and 390–410 (LITV…YRLF).

It is found in the membrane. The sequence is that of Integral membrane protein GPR180 (Gpr180) from Mus musculus (Mouse).